The following is a 306-amino-acid chain: NAD kinase 1 (306 aa).

D67 (proton acceptor) is an active-site residue. Residues 67 to 68 (DG), 149 to 150 (ND), and D181 contribute to the NAD(+) site.

The protein belongs to the NAD kinase family. It depends on a divalent metal cation as a cofactor.

Its subcellular location is the cytoplasm. It catalyses the reaction NAD(+) + ATP = ADP + NADP(+) + H(+). In terms of biological role, involved in the regulation of the intracellular balance of NAD and NADP, and is a key enzyme in the biosynthesis of NADP. Catalyzes specifically the phosphorylation on 2'-hydroxyl of the adenosine moiety of NAD to yield NADP. The chain is NAD kinase 1 from Synechococcus sp. (strain ATCC 27144 / PCC 6301 / SAUG 1402/1) (Anacystis nidulans).